Consider the following 56-residue polypeptide: U-megalopygitoxin(2)-Mo9 (56 aa).

The first 25 residues, 1-25 (MKFIVLLLIVTSVLMMFAVTTEASP), serve as a signal peptide directing secretion. A Pyrrolidone carboxylic acid modification is found at Q26. The residue at position 55 (T55) is a Threonine amide.

Belongs to the caterpillar 2 family. In terms of processing, contains 2 disulfide bonds. As to expression, expressed by the venom apparatus.

Its subcellular location is the secreted. In terms of biological role, probable toxin. The protein is U-megalopygitoxin(2)-Mo9 of Megalopyge opercularis (Southern flannel moth).